Consider the following 434-residue polypeptide: UDP-N-acetylglucosamine 1-carboxyvinyltransferase 1 (434 aa).

22 to 23 contacts phosphoenolpyruvate; sequence KN. Residue arginine 93 coordinates UDP-N-acetyl-alpha-D-glucosamine. Cysteine 117 (proton donor) is an active-site residue. Cysteine 117 is modified (2-(S-cysteinyl)pyruvic acid O-phosphothioketal). Residues 122 to 126, aspartate 306, and valine 328 each bind UDP-N-acetyl-alpha-D-glucosamine; that span reads RPIDQ.

This sequence belongs to the EPSP synthase family. MurA subfamily.

The protein resides in the cytoplasm. It catalyses the reaction phosphoenolpyruvate + UDP-N-acetyl-alpha-D-glucosamine = UDP-N-acetyl-3-O-(1-carboxyvinyl)-alpha-D-glucosamine + phosphate. It functions in the pathway cell wall biogenesis; peptidoglycan biosynthesis. Its function is as follows. Cell wall formation. Adds enolpyruvyl to UDP-N-acetylglucosamine. The protein is UDP-N-acetylglucosamine 1-carboxyvinyltransferase 1 of Bacillus cereus (strain ATCC 14579 / DSM 31 / CCUG 7414 / JCM 2152 / NBRC 15305 / NCIMB 9373 / NCTC 2599 / NRRL B-3711).